The primary structure comprises 514 residues: Putative binding protein HI_0213 (514 aa).

The N-terminal stretch at 1-23 is a signal peptide; sequence MNNLFALCQRSAVIFSIIFTVVA. A lipid anchor (N-palmitoyl cysteine) is attached at cysteine 24. Residue cysteine 24 is the site of S-diacylglycerol cysteine attachment.

It belongs to the bacterial solute-binding protein 5 family.

The protein localises to the cell membrane. Functionally, part of a binding-protein-dependent transport system. The chain is Putative binding protein HI_0213 from Haemophilus influenzae (strain ATCC 51907 / DSM 11121 / KW20 / Rd).